Reading from the N-terminus, the 922-residue chain is Coronin-7 (922 aa).

WD repeat units lie at residues 75 to 115 (CHSD…EALP), 124 to 163 (PEEL…PLTE), 166 to 205 (AHKD…QASQ), and 209 to 253 (AHEN…SALA). Residues 419–467 (DTDLSEGFSSPSSLMSPSTPSSLGPSLSSTSGIGTSPSQRSLQSLLGPS) are disordered. A compositionally biased stretch (low complexity) spans 427–456 (SSPSSLMSPSTPSSLGPSLSSTSGIGTSPS). Phosphoserine occurs at positions 459 and 462. A Glycyl lysine isopeptide (Lys-Gly) (interchain with G-Cter in ubiquitin) cross-link involves residue Lys469. WD repeat units follow at residues 539–581 (QNGT…NVLT), 589–629 (GHTE…ERLK), 632–671 (GHQD…LPLQ), and 725–765 (DVAP…PFFL). The disordered stretch occupies residues 858-922 (GMTPVSQAPR…FEGVDEDEWD (65 aa)). Residues 881 to 893 (LEEKSDQQKKEEL) show a composition bias toward basic and acidic residues. Phosphoserine is present on Ser912.

This sequence belongs to the WD repeat coronin family. Interacts with clathrin adapter AP1 complex. This interaction takes place at Golgi membranes and not AP1-positive endosomal membranes. Interacts (when ubiquitinated at Lys-469) with EPS15. In terms of processing, the membrane-associated form is phosphorylated on tyrosine residues. Post-translationally, ubiquitinated via 'Lys-33'-linked ubiquitin chains by the BCR(KLHL20) E3 ubiquitin ligase complex: 'Lys-33'-linked ubiquitination promotes interaction with EPS15 and facilitates actin polymerization at the trans-Golgi network, thereby facilitating post-Golgi trafficking. Deubiquitinated by ZRANB1/TRABID. In the adult, widely expressed with highest levels in brain, thymus and kidney and low levels in skeletal and heart muscle. Not expressed in lung. In the eye, strongly expressed in the outer plexiform layer of the retina. In the intestine, expressed both in terminally differentiated epithelial cells and in crypt epithelium. In the embryo, strongest expression is seen in brain, thymus, intestine, apical epidermal layers of the skin and developing lens fibers of the eye.

The protein localises to the golgi apparatus membrane. It localises to the golgi apparatus. It is found in the trans-Golgi network. The protein resides in the cytoplasmic vesicle. Its subcellular location is the cytoplasm. The protein localises to the cytosol. Functionally, F-actin regulator involved in anterograde Golgi to endosome transport: upon ubiquitination via 'Lys-33'-linked ubiquitin chains by the BCR(KLHL20) E3 ubiquitin ligase complex, interacts with EPS15 and localizes to the trans-Golgi network, where it promotes actin polymerization, thereby facilitating post-Golgi trafficking. May play a role in the maintenance of the Golgi apparatus morphology. This chain is Coronin-7 (Coro7), found in Mus musculus (Mouse).